The sequence spans 845 residues: MADSPFPRSSRSGLLRTTLNSSMPPQNLSHSLLILEKSNAEQNELSLMEDTGDDLDRGKSRMDVLFPQFFDVLQAQGNGQEAFEVIQSLTQVCRGVVEQLELEIDHGMGGEQGARQRESMLTWLRQEINTWRLLHALFYDRILLQTDRQADDEMQDGPTLGGSEKEVIQQLYALNATLREYQLVVDWLEACYDRGEQQNPLHAHDRMMAWENTLFQLENLQGAAFGKGHKIVTRLDPDAPVREKRPLHALDEEDNLRLSRAIFELIRAGRVDDGLKLCKHFGQTWRAAILEGWRLHEDPNFEQNVSVLHEKLPIEGNPRRDIWKRCAWMLADSKNYDEYSRATAGVFSGHLGSLKTLLHSNWHDLLWAHLKVQIDIRVESEIRGCCLKNYQPMPDDYWNGRMTMEQIFEELNVAKDASVRDFAQSQLGIIQRHLILDTCGELIQHMVRWVEKDTSQQSPHQLRFMAHIVLFLRQIGRVEQERQAEKIVAAYVEALIARGEPQLIAYYTASLSNPLQVQLYSRFLEQVEQKRPRELAVDAALQAGLDVEQITRVTVQNIRLAHQPLGEFGEPQSGEISAIDQRKISALEWLIHLPEQRGELLWQANAMIRTYLASSKVECMRQTFRMVPADIVQQLVSLYGSVDNIPPREECCLKEYLCYKAYLSGVDSFVEWNRLQQNRPKKPQTSHAASSQDNFTERMASERKEQAHRSEVVRWEHKVKEQAKQTIELLYNVLMFPDKGWLVDPFIAKLPENAVQLSWDHRLLQMEKLRSICIPEIALFLNEVMFKSGDFAGCVRLADEISSENRQLYKVYTKHKLAELLAKIADASLELLNSKLDPWGYPITT.

Disordered stretches follow at residues 1–26 and 677–702; these read MADSPFPRSSRSGLLRTTLNSSMPPQ and QNRPKKPQTSHAASSQDNFTERMASE. Polar residues-rich tracts occupy residues 7 to 26 and 685 to 694; these read PRSSRSGLLRTTLNSSMPPQ and TSHAASSQDN.

It belongs to the nucleoporin Nup84/Nup107 family. In terms of assembly, part of the nuclear pore complex (NPC). In terms of tissue distribution, expressed in spermatocytes (at protein level).

It is found in the nucleus. Its subcellular location is the nuclear pore complex. The protein localises to the nucleus envelope. The protein resides in the nucleus membrane. It localises to the cytoplasm. It is found in the cytoskeleton. Its subcellular location is the spindle. The protein localises to the chromosome. The protein resides in the nucleus matrix. Plays a role in nuclear pore complex (NPC) assembly and maintenance. Required for nuclear import of Mad. Mediates the association between the nuclear pore complex and a subset of active chromatin regions adjacent to lamin-associated domains. Plays a role in double strand break repair by relocalizing the heterochromatic double strand breaks (DSBs) to the nuclear periphery as part of the homologous recombination (HR) repair process. Regulates cytokinesis during spermatocyte meiosis by maintaining type-B lamin Lam localization to the spindle envelope. Regulates female gonad development and oogenesis. In Drosophila melanogaster (Fruit fly), this protein is Nuclear pore complex protein Nup107.